Reading from the N-terminus, the 308-residue chain is Ribosomal protein L11 methyltransferase (308 aa).

Thr-148, Gly-169, Asp-191, and Asn-239 together coordinate S-adenosyl-L-methionine.

Belongs to the methyltransferase superfamily. PrmA family.

It is found in the cytoplasm. It carries out the reaction L-lysyl-[protein] + 3 S-adenosyl-L-methionine = N(6),N(6),N(6)-trimethyl-L-lysyl-[protein] + 3 S-adenosyl-L-homocysteine + 3 H(+). Functionally, methylates ribosomal protein L11. The chain is Ribosomal protein L11 methyltransferase from Psychrobacter arcticus (strain DSM 17307 / VKM B-2377 / 273-4).